Here is a 622-residue protein sequence, read N- to C-terminus: Chaperone protein HscA homolog (622 aa).

This sequence belongs to the heat shock protein 70 family.

Its function is as follows. Chaperone involved in the maturation of iron-sulfur cluster-containing proteins. Has a low intrinsic ATPase activity which is markedly stimulated by HscB. This Burkholderia mallei (strain NCTC 10247) protein is Chaperone protein HscA homolog.